Reading from the N-terminus, the 287-residue chain is Mitochondrial dicarboxylate carrier (287 aa).

Solcar repeat units lie at residues Ser-8–Arg-88, Glu-101–Leu-188, and Asp-197–Asn-280. The next 6 helical transmembrane spans lie at Trp-10–Leu-30, Gly-63–Tyr-82, Val-103–Val-123, Gly-163–Tyr-182, Phe-203–Leu-223, and Gly-255–Glu-275.

Belongs to the mitochondrial carrier (TC 2.A.29) family. Present in high amounts in liver and kidney, and at lower levels in all the other tissues analyzed.

The protein localises to the mitochondrion inner membrane. It carries out the reaction (S)-malate(in) + phosphate(out) = (S)-malate(out) + phosphate(in). It catalyses the reaction malonate(out) + (S)-malate(in) = malonate(in) + (S)-malate(out). The enzyme catalyses (S)-malate(in) + succinate(out) = (S)-malate(out) + succinate(in). The catalysed reaction is (S)-malate(in) + sulfate(out) = (S)-malate(out) + sulfate(in). It carries out the reaction malonate(out) + phosphate(in) = malonate(in) + phosphate(out). It catalyses the reaction succinate(out) + phosphate(in) = succinate(in) + phosphate(out). The enzyme catalyses sulfate(out) + phosphate(in) = sulfate(in) + phosphate(out). The catalysed reaction is malonate(out) + succinate(in) = malonate(in) + succinate(out). In terms of biological role, catalyzes the electroneutral exchange or flux of physiologically important metabolites such as dicarboxylates (malonate, malate, succinate), inorganic sulfur-containing anions, and phosphate, across mitochondrial inner membrane. Plays an important role in gluconeogenesis, fatty acid metabolism, urea synthesis, and sulfur metabolism, particularly in liver, by supplying the substrates for the different metabolic processes. Regulates fatty acid release from adipocytes, and contributes to systemic insulin sensitivity. The polypeptide is Mitochondrial dicarboxylate carrier (SLC25A10) (Homo sapiens (Human)).